A 420-amino-acid chain; its full sequence is UDP-N-acetylglucosamine 1-carboxyvinyltransferase (420 aa).

Position 22 to 23 (22 to 23 (KN)) interacts with phosphoenolpyruvate. Residue Arg93 participates in UDP-N-acetyl-alpha-D-glucosamine binding. Cys117 (proton donor) is an active-site residue. At Cys117 the chain carries 2-(S-cysteinyl)pyruvic acid O-phosphothioketal. Residues 122-126 (RPVDL), Asp307, and Val329 each bind UDP-N-acetyl-alpha-D-glucosamine.

This sequence belongs to the EPSP synthase family. MurA subfamily.

It localises to the cytoplasm. It catalyses the reaction phosphoenolpyruvate + UDP-N-acetyl-alpha-D-glucosamine = UDP-N-acetyl-3-O-(1-carboxyvinyl)-alpha-D-glucosamine + phosphate. Its pathway is cell wall biogenesis; peptidoglycan biosynthesis. Cell wall formation. Adds enolpyruvyl to UDP-N-acetylglucosamine. This chain is UDP-N-acetylglucosamine 1-carboxyvinyltransferase, found in Hahella chejuensis (strain KCTC 2396).